A 115-amino-acid chain; its full sequence is NADH-ubiquinone oxidoreductase chain 3 (115 aa).

A run of 3 helical transmembrane segments spans residues 4 to 24 (FIVLLVNISLASCLILIAFWL), 55 to 75 (FFLVAITFLLFDLEIALLLPL), and 87 to 107 (TMLTSFILVSVLAMGLAYEWL).

Belongs to the complex I subunit 3 family. In terms of assembly, core subunit of respiratory chain NADH dehydrogenase (Complex I) which is composed of 45 different subunits. Interacts with TMEM186. Interacts with TMEM242.

The protein localises to the mitochondrion inner membrane. It catalyses the reaction a ubiquinone + NADH + 5 H(+)(in) = a ubiquinol + NAD(+) + 4 H(+)(out). Functionally, core subunit of the mitochondrial membrane respiratory chain NADH dehydrogenase (Complex I) which catalyzes electron transfer from NADH through the respiratory chain, using ubiquinone as an electron acceptor. Essential for the catalytic activity of complex I. This is NADH-ubiquinone oxidoreductase chain 3 from Reithrodontomys megalotis (Western harvest mouse).